The chain runs to 295 residues: Bifunctional protein FolD (295 aa).

Residues 165–167 (GRG), Ser-192, and Ile-233 each bind NADP(+).

Belongs to the tetrahydrofolate dehydrogenase/cyclohydrolase family. Homodimer.

It carries out the reaction (6R)-5,10-methylene-5,6,7,8-tetrahydrofolate + NADP(+) = (6R)-5,10-methenyltetrahydrofolate + NADPH. The catalysed reaction is (6R)-5,10-methenyltetrahydrofolate + H2O = (6R)-10-formyltetrahydrofolate + H(+). The protein operates within one-carbon metabolism; tetrahydrofolate interconversion. Its function is as follows. Catalyzes the oxidation of 5,10-methylenetetrahydrofolate to 5,10-methenyltetrahydrofolate and then the hydrolysis of 5,10-methenyltetrahydrofolate to 10-formyltetrahydrofolate. This is Bifunctional protein FolD from Tropheryma whipplei (strain TW08/27) (Whipple's bacillus).